We begin with the raw amino-acid sequence, 453 residues long: Serine incorporator 1 (453 aa).

Gly-2 carries the N-myristoyl glycine lipid modification. The Cytoplasmic segment spans residues Gly-2–Arg-39. A helical membrane pass occupies residues Leu-40–Gly-60. At Met-61–Lys-88 the chain is on the lumenal side. A helical membrane pass occupies residues Ala-89 to Ile-109. Over Lys-110–Asn-123 the chain is Cytoplasmic. A helical transmembrane segment spans residues Gly-124–Pro-144. The Lumenal portion of the chain corresponds to Glu-145–Val-151. Residues Trp-152 to Ile-172 form a helical membrane-spanning segment. The Cytoplasmic portion of the chain corresponds to Asp-173 to Ala-197. Residues Leu-198–Val-218 form a helical membrane-spanning segment. Residues Tyr-219–Ala-231 are Lumenal-facing. The helical transmembrane segment at Phe-232–Ile-252 threads the bilayer. Residues Gln-253–Ser-259 are Cytoplasmic-facing. The helical transmembrane segment at Gly-260 to Thr-280 threads the bilayer. Over Asn-281–Ser-309 the chain is Lumenal. The helical transmembrane segment at Val-310–Tyr-330 threads the bilayer. The Cytoplasmic segment spans residues Ser-331–Ser-387. The residue at position 351 (Ser-351) is a Phosphoserine. At Thr-352 the chain carries Phosphothreonine. Phosphoserine is present on residues Ser-361 and Ser-364. Residues Phe-388–Tyr-408 form a helical membrane-spanning segment. Residues Arg-409–Lys-426 lie on the Lumenal side of the membrane. The chain crosses the membrane as a helical span at residues Ile-427–Leu-447. Over Thr-448–Asp-453 the chain is Cytoplasmic.

It belongs to the TDE1 family. Interacts with SPTLC1. As to expression, highly expressed in the neuronal populations such as Purkinje cells in the cerebellum, brainstem and spinal motor neurons, locus coeruleus and raphe nuclei.

Its subcellular location is the endoplasmic reticulum membrane. In terms of biological role, enhances the incorporation of serine into phosphatidylserine and sphingolipids. This is Serine incorporator 1 (Serinc1) from Mus musculus (Mouse).